The primary structure comprises 153 residues: Putative pre-16S rRNA nuclease (153 aa).

It belongs to the YqgF nuclease family.

It is found in the cytoplasm. Functionally, could be a nuclease involved in processing of the 5'-end of pre-16S rRNA. In Prochlorococcus marinus (strain MIT 9215), this protein is Putative pre-16S rRNA nuclease.